The sequence spans 153 residues: Large ribosomal subunit protein uL15 (153 aa).

A disordered region spans residues 21-41; sequence RGIGSGKGKTGGRGIKGQKSR. The segment covering 23–35 has biased composition (gly residues); the sequence is IGSGKGKTGGRGI.

Belongs to the universal ribosomal protein uL15 family. In terms of assembly, part of the 50S ribosomal subunit.

Its function is as follows. Binds to the 23S rRNA. This chain is Large ribosomal subunit protein uL15, found in Rickettsia felis (strain ATCC VR-1525 / URRWXCal2) (Rickettsia azadi).